Consider the following 616-residue polypeptide: Dihydroxy-acid dehydratase (616 aa).

D81 is a binding site for Mg(2+). C122 is a binding site for [2Fe-2S] cluster. 2 residues coordinate Mg(2+): D123 and K124. The residue at position 124 (K124) is an N6-carboxylysine. C195 is a [2Fe-2S] cluster binding site. Residue E491 coordinates Mg(2+). The active-site Proton acceptor is the S517.

This sequence belongs to the IlvD/Edd family. As to quaternary structure, homodimer. The cofactor is [2Fe-2S] cluster. Requires Mg(2+) as cofactor.

It carries out the reaction (2R)-2,3-dihydroxy-3-methylbutanoate = 3-methyl-2-oxobutanoate + H2O. It catalyses the reaction (2R,3R)-2,3-dihydroxy-3-methylpentanoate = (S)-3-methyl-2-oxopentanoate + H2O. It functions in the pathway amino-acid biosynthesis; L-isoleucine biosynthesis; L-isoleucine from 2-oxobutanoate: step 3/4. Its pathway is amino-acid biosynthesis; L-valine biosynthesis; L-valine from pyruvate: step 3/4. Its function is as follows. Functions in the biosynthesis of branched-chain amino acids. Catalyzes the dehydration of (2R,3R)-2,3-dihydroxy-3-methylpentanoate (2,3-dihydroxy-3-methylvalerate) into 2-oxo-3-methylpentanoate (2-oxo-3-methylvalerate) and of (2R)-2,3-dihydroxy-3-methylbutanoate (2,3-dihydroxyisovalerate) into 2-oxo-3-methylbutanoate (2-oxoisovalerate), the penultimate precursor to L-isoleucine and L-valine, respectively. The polypeptide is Dihydroxy-acid dehydratase (Escherichia coli (strain 55989 / EAEC)).